The chain runs to 170 residues: Probable phospholipid hydroperoxide glutathione peroxidase (170 aa).

C44 is a catalytic residue.

This sequence belongs to the glutathione peroxidase family.

It localises to the cytoplasm. It catalyses the reaction a hydroperoxy polyunsaturated fatty acid + 2 glutathione = a hydroxy polyunsaturated fatty acid + glutathione disulfide + H2O. Its function is as follows. Protects cells and enzymes from oxidative damage, by catalyzing the reduction of hydrogen peroxide, lipid peroxides and organic hydroperoxide, by glutathione. The sequence is that of Probable phospholipid hydroperoxide glutathione peroxidase (GPXMC1) from Mesembryanthemum crystallinum (Common ice plant).